The following is a 255-amino-acid chain: Shieldin complex subunit 3 (255 aa).

The segment at 33–88 is sufficient for interaction with MAD2L2; it reads QDFPTHPLPRFIPWFPYDESKLPLKPERLPPVISEEAAESVKQYLAISEPGVKSQS. Residues 116 to 135 form a disordered region; that stretch reads QTNAAHLDKNSGKEKQHKQR.

In terms of assembly, component of the shieldin complex, consisting of SHLD1, SHLD2, SHLD3 and MAD2L2/REV7. Within the complex, SHLD2 forms a scaffold which interacts with a SHLD3-MAD2L2 subcomplex via its N-terminus, and with SHLD1 via its C-terminus. Interacts with ASTE1.

Its subcellular location is the chromosome. Component of the shieldin complex, which plays an important role in repair of DNA double-stranded breaks (DSBs). During G1 and S phase of the cell cycle, the complex functions downstream of TP53BP1 to promote non-homologous end joining (NHEJ) and suppress DNA end resection. Mediates various NHEJ-dependent processes including immunoglobulin class-switch recombination, and fusion of unprotected telomeres. The chain is Shieldin complex subunit 3 from Mus musculus (Mouse).